We begin with the raw amino-acid sequence, 152 residues long: UPF0225 protein YchJ (152 aa).

The protein belongs to the UPF0225 family.

The polypeptide is UPF0225 protein YchJ (Shigella dysenteriae serotype 1 (strain Sd197)).